Here is a 402-residue protein sequence, read N- to C-terminus: MDTKTFKRTLQHSENYNRKGFGHQAEVATQLQSEYQSSLIQEIRDRNYTLQRGDVTIRLAQAFGFCWGVERAVAMAYETRKHFPTERIWITNEIIHNPSVNQRMQEMQVGFIPVEAGNKDFSVVGNNDVVILPAFGASVQEMQLLSEKGCKIVDTTCPWVSKVWNTVEKHKKGDHTSIIHGKYKHEETIATSSFAGKYLIVLNLKEAQYVADYILHGGNREEFLQKFAKACSAGFDPDRDLERVGIANQTTMLKGETEQIGKLFEHTMLQKYGPVELNQHFQSFNTICDATQERQDAMLELVQENLDLMIVIGGFNSSNTTQLQQISQERGLPSYHIDVVERIKSINSIEHRQLNGELVTTENWLPAGKIVVGVTSGASTPDKVVEDVIEKIFALKATAAVF.

Position 66 (Cys-66) interacts with [4Fe-4S] cluster. His-96 contacts (2E)-4-hydroxy-3-methylbut-2-enyl diphosphate. Dimethylallyl diphosphate is bound at residue His-96. His-96 contributes to the isopentenyl diphosphate binding site. Position 157 (Cys-157) interacts with [4Fe-4S] cluster. A (2E)-4-hydroxy-3-methylbut-2-enyl diphosphate-binding site is contributed by His-185. A dimethylallyl diphosphate-binding site is contributed by His-185. His-185 is a binding site for isopentenyl diphosphate. The Proton donor role is filled by Glu-187. Thr-250 provides a ligand contact to (2E)-4-hydroxy-3-methylbut-2-enyl diphosphate. Cys-288 contributes to the [4Fe-4S] cluster binding site. Residues Ser-317, Ser-318, Asn-319, and Ser-379 each contribute to the (2E)-4-hydroxy-3-methylbut-2-enyl diphosphate site. Dimethylallyl diphosphate is bound by residues Ser-317, Ser-318, Asn-319, and Ser-379. The isopentenyl diphosphate site is built by Ser-317, Ser-318, Asn-319, and Ser-379.

This sequence belongs to the IspH family. The cofactor is [4Fe-4S] cluster.

The enzyme catalyses isopentenyl diphosphate + 2 oxidized [2Fe-2S]-[ferredoxin] + H2O = (2E)-4-hydroxy-3-methylbut-2-enyl diphosphate + 2 reduced [2Fe-2S]-[ferredoxin] + 2 H(+). It carries out the reaction dimethylallyl diphosphate + 2 oxidized [2Fe-2S]-[ferredoxin] + H2O = (2E)-4-hydroxy-3-methylbut-2-enyl diphosphate + 2 reduced [2Fe-2S]-[ferredoxin] + 2 H(+). The protein operates within isoprenoid biosynthesis; dimethylallyl diphosphate biosynthesis; dimethylallyl diphosphate from (2E)-4-hydroxy-3-methylbutenyl diphosphate: step 1/1. Its pathway is isoprenoid biosynthesis; isopentenyl diphosphate biosynthesis via DXP pathway; isopentenyl diphosphate from 1-deoxy-D-xylulose 5-phosphate: step 6/6. Catalyzes the conversion of 1-hydroxy-2-methyl-2-(E)-butenyl 4-diphosphate (HMBPP) into a mixture of isopentenyl diphosphate (IPP) and dimethylallyl diphosphate (DMAPP). Acts in the terminal step of the DOXP/MEP pathway for isoprenoid precursor biosynthesis. This Nostoc sp. (strain PCC 7120 / SAG 25.82 / UTEX 2576) protein is 4-hydroxy-3-methylbut-2-enyl diphosphate reductase.